A 439-amino-acid polypeptide reads, in one-letter code: Tol-Pal system protein TolB (439 aa).

A signal peptide spans 1–22; sequence MTKFPRWLAILVGLLFPLSALT.

Belongs to the TolB family. The Tol-Pal system is composed of five core proteins: the inner membrane proteins TolA, TolQ and TolR, the periplasmic protein TolB and the outer membrane protein Pal. They form a network linking the inner and outer membranes and the peptidoglycan layer.

It is found in the periplasm. Part of the Tol-Pal system, which plays a role in outer membrane invagination during cell division and is important for maintaining outer membrane integrity. In Xylella fastidiosa (strain M12), this protein is Tol-Pal system protein TolB.